Here is a 113-residue protein sequence, read N- to C-terminus: Transmembrane protein 256 (113 aa).

The N-terminal stretch at 1–29 (MAGPAAAFRRLGALSGAAALGFASYGAHG) is a signal peptide. The Extracellular segment spans residues 30-63 (AQFPDAYGKELFDKANKHHFLHSLALLGVPHCRK). Lysine 43 is subject to N6-acetyllysine. Residues 64–84 (PLWAGLLLASGTTLFCTSFYY) traverse the membrane as a helical segment. Over 85–92 (QALSGDPS) the chain is Cytoplasmic. The helical transmembrane segment at 93–113 (IQTLAPAGGTLLLLGWLALAL) threads the bilayer.

It belongs to the TMEM256 family.

The protein localises to the membrane. The protein is Transmembrane protein 256 (TMEM256) of Homo sapiens (Human).